The primary structure comprises 83 residues: Exodeoxyribonuclease 7 small subunit (83 aa).

This sequence belongs to the XseB family. In terms of assembly, heterooligomer composed of large and small subunits.

It localises to the cytoplasm. It carries out the reaction Exonucleolytic cleavage in either 5'- to 3'- or 3'- to 5'-direction to yield nucleoside 5'-phosphates.. Its function is as follows. Bidirectionally degrades single-stranded DNA into large acid-insoluble oligonucleotides, which are then degraded further into small acid-soluble oligonucleotides. The sequence is that of Exodeoxyribonuclease 7 small subunit from Rhodopseudomonas palustris (strain ATCC BAA-98 / CGA009).